The sequence spans 513 residues: Light-independent protochlorophyllide reductase subunit B (513 aa).

Asp36 lines the [4Fe-4S] cluster pocket. The active-site Proton donor is the Asp274. Substrate is bound at residue 409-410; the sequence is GL. The interval 426–457 is disordered; that stretch reads DAAGPSHHGGHSPKPQAAEPAPQAAPQPENTG. A compositionally biased stretch (low complexity) spans 440-454; sequence PQAAEPAPQAAPQPE.

It belongs to the ChlB/BchB/BchZ family. As to quaternary structure, protochlorophyllide reductase is composed of three subunits; BchL, BchN and BchB. Forms a heterotetramer of two BchB and two BchN subunits. [4Fe-4S] cluster serves as cofactor.

The enzyme catalyses chlorophyllide a + oxidized 2[4Fe-4S]-[ferredoxin] + 2 ADP + 2 phosphate = protochlorophyllide a + reduced 2[4Fe-4S]-[ferredoxin] + 2 ATP + 2 H2O. Its pathway is porphyrin-containing compound metabolism; bacteriochlorophyll biosynthesis (light-independent). Functionally, component of the dark-operative protochlorophyllide reductase (DPOR) that uses Mg-ATP and reduced ferredoxin to reduce ring D of protochlorophyllide (Pchlide) to form chlorophyllide a (Chlide). This reaction is light-independent. The NB-protein (BchN-BchB) is the catalytic component of the complex. This Roseobacter denitrificans (strain ATCC 33942 / OCh 114) (Erythrobacter sp. (strain OCh 114)) protein is Light-independent protochlorophyllide reductase subunit B.